Consider the following 305-residue polypeptide: 4-diphosphocytidyl-2-C-methyl-D-erythritol kinase (305 aa).

Residue lysine 17 is part of the active site. 111-121 (PVASGIGGGSA) lines the ATP pocket. Aspartate 154 is an active-site residue.

It belongs to the GHMP kinase family. IspE subfamily.

The enzyme catalyses 4-CDP-2-C-methyl-D-erythritol + ATP = 4-CDP-2-C-methyl-D-erythritol 2-phosphate + ADP + H(+). Its pathway is isoprenoid biosynthesis; isopentenyl diphosphate biosynthesis via DXP pathway; isopentenyl diphosphate from 1-deoxy-D-xylulose 5-phosphate: step 3/6. Its function is as follows. Catalyzes the phosphorylation of the position 2 hydroxy group of 4-diphosphocytidyl-2C-methyl-D-erythritol. The sequence is that of 4-diphosphocytidyl-2-C-methyl-D-erythritol kinase from Gluconacetobacter diazotrophicus (strain ATCC 49037 / DSM 5601 / CCUG 37298 / CIP 103539 / LMG 7603 / PAl5).